A 516-amino-acid chain; its full sequence is Arabinose import ATP-binding protein AraG (516 aa).

ABC transporter domains lie at 5–240 (LRFD…MVGR) and 240–497 (REIS…LPQS). 37–44 (GENGAGKS) serves as a coordination point for ATP.

It belongs to the ABC transporter superfamily. Arabinose importer (TC 3.A.1.2.2) family. In terms of assembly, the complex is composed of two ATP-binding proteins (AraG), two transmembrane proteins (AraH) and a solute-binding protein (AraF).

The protein localises to the cell inner membrane. It catalyses the reaction L-arabinose(out) + ATP + H2O = L-arabinose(in) + ADP + phosphate + H(+). Its function is as follows. Part of the ABC transporter complex AraFGH involved in arabinose import. Responsible for energy coupling to the transport system. The chain is Arabinose import ATP-binding protein AraG from Paraburkholderia xenovorans (strain LB400).